The sequence spans 401 residues: Probable trafficking protein particle complex subunit 13 homolog (401 aa).

It belongs to the TRAPPC13 family.

The chain is Probable trafficking protein particle complex subunit 13 homolog from Caenorhabditis briggsae.